Consider the following 121-residue polypeptide: Basic phospholipase A2 daboxin P (121 aa).

Cystine bridges form between Cys-26-Cys-115, Cys-28-Cys-44, Cys-43-Cys-95, Cys-49-Cys-121, Cys-50-Cys-88, Cys-57-Cys-81, and Cys-75-Cys-86. The Ca(2+) site is built by Tyr-27, Gly-29, and Gly-31. Residue His-47 is part of the active site. Asp-48 is a Ca(2+) binding site. Asp-89 is a catalytic residue.

Ca(2+) is required as a cofactor. In terms of tissue distribution, expressed by the venom gland.

The protein resides in the secreted. The catalysed reaction is a 1,2-diacyl-sn-glycero-3-phosphocholine + H2O = a 1-acyl-sn-glycero-3-phosphocholine + a fatty acid + H(+). Functionally, snake venom phospholipase A2 (PLA2) that exhibits anticoagulant activity, probably by binding to factor X and its activated form factor Xa (F10). Shows no cytotoxicity. PLA2 catalyzes the calcium-dependent hydrolysis of the 2-acyl groups in 3-sn-phosphoglycerides. The protein is Basic phospholipase A2 daboxin P of Daboia russelii (Russel's viper).